The primary structure comprises 876 residues: Phosphoenolpyruvate carboxylase (876 aa).

Catalysis depends on residues histidine 138 and lysine 544.

Belongs to the PEPCase type 1 family. Mg(2+) serves as cofactor.

The catalysed reaction is oxaloacetate + phosphate = phosphoenolpyruvate + hydrogencarbonate. In terms of biological role, forms oxaloacetate, a four-carbon dicarboxylic acid source for the tricarboxylic acid cycle. The sequence is that of Phosphoenolpyruvate carboxylase from Marinomonas sp. (strain MWYL1).